The following is a 530-amino-acid chain: Probable histone-arginine methyltransferase CARMER (530 aa).

The region spanning 141–450 is the SAM-dependent MTase PRMT-type domain; it reads ASQYFQFYGY…QSYDVTIDLH (310 aa). Gln-154, Arg-163, Gly-187, Glu-209, Glu-238, and Thr-266 together coordinate S-adenosyl-L-methionine. Residue Arg-501 is modified to Asymmetric dimethylarginine; by autocatalysis.

Belongs to the class I-like SAM-binding methyltransferase superfamily. Protein arginine N-methyltransferase family. As to quaternary structure, homodimer. Interacts with EcR. The dimethylated protein is the major form. In terms of tissue distribution, present ubiquitously (at protein level). Expressed in the imaginal disks and in larval brains, and to a much lesser degree in the polytene larval tissue such as salivary glands.

It localises to the cytoplasm. It is found in the nucleus. The catalysed reaction is L-arginyl-[protein] + 2 S-adenosyl-L-methionine = N(omega),N(omega)-dimethyl-L-arginyl-[protein] + 2 S-adenosyl-L-homocysteine + 2 H(+). Methylates (mono- and asymmetric dimethylation) the guanidino nitrogens of arginyl residues in proteins. May methylate histone H3 at 'Arg-17' and activate transcription via chromatin remodeling. Coordinates ecdysone-mediated expression of cell death genes. This chain is Probable histone-arginine methyltransferase CARMER (Art4), found in Drosophila melanogaster (Fruit fly).